The primary structure comprises 252 residues: tRNA pseudouridine synthase A (252 aa).

Catalysis depends on D52, which acts as the Nucleophile. Residue Y111 participates in substrate binding.

It belongs to the tRNA pseudouridine synthase TruA family. Homodimer.

It catalyses the reaction uridine(38/39/40) in tRNA = pseudouridine(38/39/40) in tRNA. Its function is as follows. Formation of pseudouridine at positions 38, 39 and 40 in the anticodon stem and loop of transfer RNAs. The protein is tRNA pseudouridine synthase A of Methylorubrum populi (strain ATCC BAA-705 / NCIMB 13946 / BJ001) (Methylobacterium populi).